A 473-amino-acid chain; its full sequence is Cucurbitadienol 11-hydroxylase (473 aa).

A helical membrane pass occupies residues 4 to 24 (VVLGLATLFVAYYIHWINKWR). A heme-binding site is contributed by Cys-422.

The protein belongs to the cytochrome P450 family. Heme is required as a cofactor. As to expression, highly expressed in young fruits 15 days after anthesis (15-DAA). Also observed in roots.

It localises to the membrane. The catalysed reaction is cucurbitadienol + 2 reduced [NADPH--hemoprotein reductase] + 2 O2 = 11-oxocucurbitadienol + 2 oxidized [NADPH--hemoprotein reductase] + 3 H2O + 2 H(+). The enzyme catalyses cucurbitadienol + reduced [NADPH--hemoprotein reductase] + O2 = 11-hydroxycucurbitadienol + oxidized [NADPH--hemoprotein reductase] + H2O + H(+). It catalyses the reaction 11-hydroxycucurbitadienol + reduced [NADPH--hemoprotein reductase] + O2 = 11-oxocucurbitadienol + oxidized [NADPH--hemoprotein reductase] + 2 H2O + H(+). It carries out the reaction (24R)-24,25-dihydroxycucurbitadienol + reduced [NADPH--hemoprotein reductase] + O2 = mogrol + oxidized [NADPH--hemoprotein reductase] + H2O + H(+). It functions in the pathway secondary metabolite biosynthesis; terpenoid biosynthesis. Its function is as follows. Hydroxylase involved in the biosynthesis of cucurbitacin and mogroside tetracyclic triterpene natural products (e.g. siamenoside I and mogrosides IV, V and VI). Cucurbitacins have cytotoxic properties and exhibit deterrent taste as a defense barrier against herbivores. Mogrosides are nonsugar highly oxygenated compounds used as high-intensity zero-calorie sweeteners; they also possess pharmacological properties such as regulating immunity, lowering blood sugar and lipid levels, protecting the liver, and acting as antioxidants and antitumor agents. Catalyzes the oxidation of cucurbitadienol at the C-11 position to produce 11-oxocucurbitadienol, a possible biosynthetic intermediate from cucurbitadienol to mogrol. Also mediates the conversion of 24,25-dihydroxycucurbitadienol to mogrol. The polypeptide is Cucurbitadienol 11-hydroxylase (Siraitia grosvenorii (Monk's fruit)).